The chain runs to 491 residues: Angiopoietin-related protein 1 (491 aa).

The first 23 residues, 1–23, serve as a signal peptide directing secretion; sequence MKAFIWTLSVLFFLLMGIGHGRG. A coiled-coil region spans residues 80–168; that stretch reads ITRMDLENLK…LNVTTEMLKM (89 aa). N-linked (GlcNAc...) asparagine glycans are attached at residues Asn-160 and Asn-188. Residues 271 to 491 form the Fibrinogen C-terminal domain; the sequence is FINEGPYKDC…AVQMLIKPID (221 aa). 2 cysteine pairs are disulfide-bonded: Cys-280–Cys-309 and Cys-432–Cys-445.

The protein localises to the secreted. The protein is Angiopoietin-related protein 1 (ANGPTL1) of Bos taurus (Bovine).